The sequence spans 651 residues: UvrABC system protein B (651 aa).

The region spanning 25–411 (RGISCGAKEQ…TGGVATEQLI (387 aa)) is the Helicase ATP-binding domain. 38 to 45 (GVTGSGKT) is a binding site for ATP. Positions 91–114 (YYDYYQPEAYIPQSDVYIEKDALI) match the Beta-hairpin motif. The Helicase C-terminal domain maps to 427-591 (DGQIHDVMCE…IVPRTIQKPV (165 aa)). The disordered stretch occupies residues 593–615 (TSLSERVGSSRKKVSRDTNTDPA). One can recognise a UVR domain in the interval 616 to 651 (NRDIVELQKEMLLCAENLDFERAVEIRNEIKRLTAP).

The protein belongs to the UvrB family. In terms of assembly, forms a heterotetramer with UvrA during the search for lesions. Interacts with UvrC in an incision complex.

The protein resides in the cytoplasm. Functionally, the UvrABC repair system catalyzes the recognition and processing of DNA lesions. A damage recognition complex composed of 2 UvrA and 2 UvrB subunits scans DNA for abnormalities. Upon binding of the UvrA(2)B(2) complex to a putative damaged site, the DNA wraps around one UvrB monomer. DNA wrap is dependent on ATP binding by UvrB and probably causes local melting of the DNA helix, facilitating insertion of UvrB beta-hairpin between the DNA strands. Then UvrB probes one DNA strand for the presence of a lesion. If a lesion is found the UvrA subunits dissociate and the UvrB-DNA preincision complex is formed. This complex is subsequently bound by UvrC and the second UvrB is released. If no lesion is found, the DNA wraps around the other UvrB subunit that will check the other stand for damage. This chain is UvrABC system protein B, found in Anaplasma marginale (strain St. Maries).